Here is a 511-residue protein sequence, read N- to C-terminus: GATA zinc finger domain-containing protein 15 (511 aa).

Residues 1–111 (TNNNNFNNIN…FNDNCNNNSN (111 aa)) are compositionally biased toward low complexity. Disordered regions lie at residues 1-194 (TNNN…NTFF), 214-313 (NVNN…NENK), and 325-355 (NLQYSPPPFQLDSGSTTPKTPSAPTSPVLSP). The segment covering 124–135 (SLQNINQYPLSP) has biased composition (polar residues). The span at 136–166 (NNNKSSNQHLSHSSSNVNSQYYQTPYYQPSQ) shows a compositional bias: low complexity. Residues 167–185 (KQNSPNSTPPLNGCQYENH) are compositionally biased toward polar residues. Composition is skewed to low complexity over residues 214 to 309 (NVNN…NNDN) and 337 to 351 (SGSTTPKTPSAPTSP). The GATA-type zinc-finger motif lies at 453–478 (CQACGTRASPEWRKGPDGFKSLCNAC).

The polypeptide is GATA zinc finger domain-containing protein 15 (gtaO) (Dictyostelium discoideum (Social amoeba)).